The primary structure comprises 591 residues: Calnexin (591 aa).

The first 20 residues, 1 to 20 (MEGKWLLCLLLVLGTAAIQA), serve as a signal peptide directing secretion. Topologically, residues 21–482 (HDGHDDDMID…QMLEAAEERP (462 aa)) are lumenal. Serine 75 and aspartate 118 together coordinate Ca(2+). Lysine 138 carries the post-translational modification N6-acetyllysine. Cysteines 161 and 195 form a disulfide. An alpha-D-glucoside is bound by residues tyrosine 165, lysine 167, tyrosine 186, and aspartate 193. Residues 261–347 (GNLLNDMTPP…EKPEDWDEDM (87 aa)) are disordered. Basic and acidic residues predominate over residues 275-320 (REIEDPEDRKPEDWDERPKIADPDAVKPDDWDEDAPSKIPDEEATK). The tract at residues 277–410 (IEDPEDRKPE…RKIPNPDFFE (134 aa)) is p domain (Extended arm). 5 consecutive repeat copies span residues 279–291 (DPED…WDER), 296–308 (DPDA…WDED), 315–327 (DEEA…WLDD), 334–346 (DPDA…WDED), and 349–359 (GEWEAPQIANP). 4 X approximate repeats stretches follow at residues 279–346 (DPED…WDED) and 349–406 (GEWE…IPNP). Residues 324-347 (WLDDEPEYIPDPDAEKPEDWDEDM) are compositionally biased toward acidic residues. Residues 327 to 360 (DEPEYIPDPDAEKPEDWDEDMDGEWEAPQIANPK) are interaction with PPIB. A disulfide bond links cysteine 361 and cysteine 367. Tandem repeats lie at residues 368 to 378 (GVWQRPMIDNP), 382 to 392 (GKWKPPMIDNP), and 396 to 406 (GIWKPRKIPNP). Residue glutamate 426 participates in an alpha-D-glucoside binding. Aspartate 437 contacts Ca(2+). Residues 483 to 503 (WLWVVYILTVALPVFLVILFC) traverse the membrane as a helical segment. S-palmitoyl cysteine attachment occurs at residues cysteine 503 and cysteine 504. The Cytoplasmic portion of the chain corresponds to 504–591 (CSGKKQSNAM…SPRNRKPRRE (88 aa)). The tract at residues 504–591 (CSGKKQSNAM…SPRNRKPRRE (88 aa)) is sufficient to mediate interaction with SGIP1. The span at 514–538 (EYKKTDAPQPDVKDEEGKEEEKNKG) shows a compositional bias: basic and acidic residues. The tract at residues 514-591 (EYKKTDAPQP…SPRNRKPRRE (78 aa)) is disordered. Residue serine 553 is modified to Phosphoserine. Residues 555–568 (AEEDGGTGSQDEED) show a composition bias toward acidic residues. Threonine 561 is modified (phosphothreonine). The residue at position 563 (serine 563) is a Phosphoserine; by MAPK3. A Phosphoserine modification is found at serine 582.

It belongs to the calreticulin family. As to quaternary structure, interacts with MAPK3/ERK1. Interacts with KCNH2. Associates with ribosomes. Interacts with SGIP1; involved in negative regulation of endocytosis. The palmitoylated form interacts with the ribosome-translocon complex component SSR1, promoting efficient folding of glycoproteins. Interacts with SERPINA2P/SERPINA2 and with the S and Z variants of SERPINA1. Interacts with PPIB. Interacts with ZNRF4. Interacts with SMIM22. Interacts with TMX2. Interacts with TMEM35A/NACHO and CHRNA7. Interacts with reticulophagy regulators RETREG2 and RETREG3. Interacts with DNM1L; may form part of a larger protein complex at the ER-mitochondrial interface during mitochondrial fission. Interacts with ADAM7. In terms of processing, phosphorylated at Ser-563 by MAPK3/ERK1. Phosphorylation by MAPK3/ERK1 increases its association with ribosomes. Palmitoylation by DHHC6 leads to the preferential localization to the perinuclear rough ER. It mediates the association of calnexin with the ribosome-translocon complex (RTC) which is required for efficient folding of glycosylated proteins. Post-translationally, ubiquitinated, leading to proteasomal degradation. Probably ubiquitinated by ZNRF4.

The protein resides in the endoplasmic reticulum membrane. The protein localises to the mitochondrion membrane. Its subcellular location is the melanosome membrane. In terms of biological role, calcium-binding protein that interacts with newly synthesized monoglucosylated glycoproteins in the endoplasmic reticulum. It may act in assisting protein assembly and/or in the retention within the ER of unassembled protein subunits. It seems to play a major role in the quality control apparatus of the ER by the retention of incorrectly folded proteins. Associated with partial T-cell antigen receptor complexes that escape the ER of immature thymocytes, it may function as a signaling complex regulating thymocyte maturation. Additionally it may play a role in receptor-mediated endocytosis at the synapse. The chain is Calnexin (Canx) from Rattus norvegicus (Rat).